A 171-amino-acid chain; its full sequence is Peptide deformylase (171 aa).

Positions 91 and 133 each coordinate Fe cation. Glutamate 134 is a catalytic residue. Histidine 137 is a binding site for Fe cation.

It belongs to the polypeptide deformylase family. Requires Fe(2+) as cofactor.

The catalysed reaction is N-terminal N-formyl-L-methionyl-[peptide] + H2O = N-terminal L-methionyl-[peptide] + formate. Removes the formyl group from the N-terminal Met of newly synthesized proteins. Requires at least a dipeptide for an efficient rate of reaction. N-terminal L-methionine is a prerequisite for activity but the enzyme has broad specificity at other positions. The sequence is that of Peptide deformylase from Haemophilus ducreyi (strain 35000HP / ATCC 700724).